We begin with the raw amino-acid sequence, 946 residues long: Inter-alpha-trypsin inhibitor heavy chain H2 (946 aa).

The N-terminal stretch at 1-18 is a signal peptide; it reads MKRLTCFFICFFLSEVSG. Residues 19–54 constitute a propeptide that is removed on maturation; it reads FEIPINGLSEFVDYEDLVELAPGKFQLVAENRRYQR. Residues 56 to 185 enclose the VIT domain; it reads LPGESEEMME…KVQFELHYQE (130 aa). Position 60 is a phosphoserine; by FAM20C (serine 60). An N-linked (GlcNAc...) (complex) asparagine glycan is attached at asparagine 118. A disulfide bond links cysteine 261 and cysteine 264. 2 positions are modified to 4-carboxyglutamate: glutamate 282 and glutamate 283. Residues 308–468 enclose the VWFA domain; it reads PKNILFVIDV…YDFLKRLSNE (161 aa). A glycan (N-linked (GlcNAc...) asparagine) is linked at asparagine 445. At serine 466 the chain carries Phosphoserine; by FAM20C. A disulfide bridge links cysteine 650 with cysteine 651. The tract at residues 665–679 is O-glycosylated at three sites; it reads STPSWANPSPTPVIS. O-linked (GalNAc...) threonine; partial glycosylation occurs at threonine 666. Serine 673 is a glycosylation site (O-linked (GalNAc...) serine). O-linked (GalNAc...) threonine glycosylation is found at threonine 675 and threonine 691. Aspartate 702 bears the Aspartate 1-(chondroitin 4-sulfate)-ester mark. The propeptide occupies 703 to 946; the sequence is PHFIIYLPKS…PQLYSFLKRP (244 aa). A Phosphoserine; by FAM20C modification is found at serine 886.

In terms of assembly, I-alpha-I plasma protease inhibitors are assembled from one or two heavy chains (HC) and one light chain, bikunin. Inter-alpha-inhibitor (I-alpha-I) is composed of ITIH1/HC1, ITIH2/HC2 and bikunin. Heavy chains are linked to bikunin via chondroitin 4-sulfate esterified to the alpha-carboxyl of the C-terminal aspartate after propeptide cleavage. In terms of processing, N- and O-glycosylated. O-glycosylated with core 1 or possibly core 8 glycans. Post-translationally, phosphorylated by FAM20C in the extracellular medium. Plasma.

Its subcellular location is the secreted. Its function is as follows. May act as a carrier of hyaluronan in serum or as a binding protein between hyaluronan and other matrix protein, including those on cell surfaces in tissues to regulate the localization, synthesis and degradation of hyaluronan which are essential to cells undergoing biological processes. The polypeptide is Inter-alpha-trypsin inhibitor heavy chain H2 (ITIH2) (Homo sapiens (Human)).